The sequence spans 359 residues: MAQRLTGEQTLDHYEDSTHASIFTYTNSNSTKGPFEGPNYHIAPRWVYHLTSTWMILVVVASVFTNGLVLAATMRFKKLRHPLNWILVNLAVADLAETIIASTISVVNQIYGYFVLGHPLCVIEGYIVSLCGITGLWSLAIISWERWLVVCKPFGNVRFDAKLATVGIVFSWVWAAIWTAPPIFGWSRYWPYGLKTSCGPDVFSGTSYPGVQSYMMVLMVTCCIFPLSIIVLCYLQVWLAIRAVAKQQKESESTQKAEKEVTRMVVVMVFAYCLCWGPYTFFACFATAHPGYAFHPLVASLPSYFAKSATIYNPIIYVFMNRQFRNCILHLFGKKVDDSSELSSTSKTEVSSVSSVSPA.

Residues Met1–Val47 lie on the Extracellular side of the membrane. The interval Asp12–Pro38 is required for 11-cis-retinal regeneration. Asn29 carries N-linked (GlcNAc...) asparagine glycosylation. The chain crosses the membrane as a helical span at residues Tyr48 to Ala72. Topologically, residues Thr73–Asn84 are cytoplasmic. Residues Trp85–Ile110 form a helical membrane-spanning segment. The Extracellular segment spans residues Tyr111 to Glu124. Cysteines 121 and 198 form a disulfide. Residues Gly125–Trp144 traverse the membrane as a helical segment. Residues Glu145–Leu163 lie on the Cytoplasmic side of the membrane. The helical transmembrane segment at Ala164–Ser187 threads the bilayer. Residues Arg188–Ser213 lie on the Extracellular side of the membrane. A helical membrane pass occupies residues Tyr214–Ile241. The Cytoplasmic portion of the chain corresponds to Arg242–Arg263. A helical transmembrane segment spans residues Met264–Thr287. Residues Ala288–His295 are Extracellular-facing. Residues Pro296–Met320 traverse the membrane as a helical segment. Lys307 is modified (N6-(retinylidene)lysine). At Asn321–Ala359 the chain is on the cytoplasmic side.

Belongs to the G-protein coupled receptor 1 family. Opsin subfamily. Monomer. Homodimer. Homotetramer. Post-translationally, N-glycosylated. O-glycosylated. In terms of processing, phosphorylated on some or all of the serine and threonine residues present in the C-terminal region. As to expression, expressed in retina (at protein level). Expressed in cone photoreceptor cells (at protein level).

Its subcellular location is the cell membrane. Functionally, visual pigments are the light-absorbing molecules that mediate vision. They consist of an apoprotein, opsin, covalently linked to cis-retinal. May increase spectral sensitivity in dim light. The sequence is that of Medium-wave-sensitive opsin 1 (Opn1mw) from Mus musculus (Mouse).